The chain runs to 358 residues: Putative pyruvyl transferase EpsI (358 aa).

This sequence belongs to the polysaccharide pyruvyl transferase family.

May be involved in the production of the exopolysaccharide (EPS) component of the extracellular matrix during biofilm formation. EPS is responsible for the adhesion of chains of cells into bundles. The chain is Putative pyruvyl transferase EpsI (epsI) from Bacillus subtilis (strain 168).